Here is a 160-residue protein sequence, read N- to C-terminus: Putative pre-16S rRNA nuclease (160 aa).

The protein belongs to the YqgF nuclease family.

The protein localises to the cytoplasm. In terms of biological role, could be a nuclease involved in processing of the 5'-end of pre-16S rRNA. The chain is Putative pre-16S rRNA nuclease from Rhodopseudomonas palustris (strain ATCC BAA-98 / CGA009).